We begin with the raw amino-acid sequence, 24 residues long: Outer membrane protein (24 aa).

This sequence belongs to the Gram-negative porin family. Homotrimer.

The protein resides in the cell outer membrane. Forms pores that allow passive diffusion of small molecules across the outer membrane. This Sodalis glossinidius protein is Outer membrane protein.